Consider the following 181-residue polypeptide: ATP-dependent protease subunit HslV (181 aa).

Thr-7 is a catalytic residue. Ala-166, Cys-169, and Thr-172 together coordinate Na(+).

It belongs to the peptidase T1B family. HslV subfamily. In terms of assembly, a double ring-shaped homohexamer of HslV is capped on each side by a ring-shaped HslU homohexamer. The assembly of the HslU/HslV complex is dependent on binding of ATP.

It localises to the cytoplasm. It carries out the reaction ATP-dependent cleavage of peptide bonds with broad specificity.. Allosterically activated by HslU binding. In terms of biological role, protease subunit of a proteasome-like degradation complex believed to be a general protein degrading machinery. The chain is ATP-dependent protease subunit HslV from Anaeromyxobacter dehalogenans (strain 2CP-1 / ATCC BAA-258).